The following is a 239-amino-acid chain: Putative zinc finger protein 132L (239 aa).

Positions 20-40 are disordered; the sequence is DASLSTKSPKREPSQEKEIKK. The span at 28-40 shows a compositional bias: basic and acidic residues; that stretch reads PKREPSQEKEIKK. 2 C3H1-type zinc fingers span residues 44–68 and 81–106; these read IKKN…HPGE and RRKT…HDES. The interval 128 to 151 is disordered; sequence PGECKFSHPPPPPPSPPSPPPKEE. A compositionally biased stretch (pro residues) spans 135 to 147; it reads HPPPPPPSPPSPP.

This is Putative zinc finger protein 132L from Acheta domesticus (House cricket).